The primary structure comprises 81 residues: Photosystem I iron-sulfur center (81 aa).

4Fe-4S ferredoxin-type domains follow at residues 2–31 (AHSV…MVPW) and 39–68 (IASA…VRVY). [4Fe-4S] cluster-binding residues include Cys11, Cys14, Cys17, Cys21, Cys48, Cys51, Cys54, and Cys58.

The eukaryotic PSI reaction center is composed of at least 11 subunits. The cofactor is [4Fe-4S] cluster.

The protein localises to the plastid. It is found in the chloroplast thylakoid membrane. The catalysed reaction is reduced [plastocyanin] + hnu + oxidized [2Fe-2S]-[ferredoxin] = oxidized [plastocyanin] + reduced [2Fe-2S]-[ferredoxin]. Its function is as follows. Apoprotein for the two 4Fe-4S centers FA and FB of photosystem I (PSI); essential for photochemical activity. FB is the terminal electron acceptor of PSI, donating electrons to ferredoxin. The C-terminus interacts with PsaA/B/D and helps assemble the protein into the PSI complex. Required for binding of PsaD and PsaE to PSI. PSI is a plastocyanin-ferredoxin oxidoreductase, converting photonic excitation into a charge separation, which transfers an electron from the donor P700 chlorophyll pair to the spectroscopically characterized acceptors A0, A1, FX, FA and FB in turn. This Gnetum gnemon (Spanish joint-fir) protein is Photosystem I iron-sulfur center.